A 278-amino-acid polypeptide reads, in one-letter code: Large ribosomal subunit protein uL2 (278 aa).

Composition is skewed to basic residues over residues 210-220 (GRMRWKGKRPS) and 257-278 (TRRK…NKKR). The interval 210 to 278 (GRMRWKGKRP…VRRRKSNKKR (69 aa)) is disordered.

The protein belongs to the universal ribosomal protein uL2 family. As to quaternary structure, part of the 50S ribosomal subunit. Forms a bridge to the 30S subunit in the 70S ribosome.

Functionally, one of the primary rRNA binding proteins. Required for association of the 30S and 50S subunits to form the 70S ribosome, for tRNA binding and peptide bond formation. It has been suggested to have peptidyltransferase activity; this is somewhat controversial. Makes several contacts with the 16S rRNA in the 70S ribosome. The chain is Large ribosomal subunit protein uL2 from Acidothermus cellulolyticus (strain ATCC 43068 / DSM 8971 / 11B).